The following is a 387-amino-acid chain: LL-diaminopimelate aminotransferase (387 aa).

Tyrosine 14 and glycine 39 together coordinate substrate. Residues tyrosine 68, 102–103 (SK), tyrosine 127, asparagine 177, tyrosine 208, and 236–238 (SLS) each bind pyridoxal 5'-phosphate. Substrate-binding residues include lysine 103, tyrosine 127, and asparagine 177. Lysine 239 carries the N6-(pyridoxal phosphate)lysine modification. Arginine 247 is a binding site for pyridoxal 5'-phosphate. Arginine 365 contributes to the substrate binding site.

Belongs to the class-I pyridoxal-phosphate-dependent aminotransferase family. LL-diaminopimelate aminotransferase subfamily. In terms of assembly, homodimer. Requires pyridoxal 5'-phosphate as cofactor.

The enzyme catalyses (2S,6S)-2,6-diaminopimelate + 2-oxoglutarate = (S)-2,3,4,5-tetrahydrodipicolinate + L-glutamate + H2O + H(+). It functions in the pathway amino-acid biosynthesis; L-lysine biosynthesis via DAP pathway; LL-2,6-diaminopimelate from (S)-tetrahydrodipicolinate (aminotransferase route): step 1/1. Functionally, involved in the synthesis of meso-diaminopimelate (m-DAP or DL-DAP), required for both lysine and peptidoglycan biosynthesis. Catalyzes the direct conversion of tetrahydrodipicolinate to LL-diaminopimelate. The protein is LL-diaminopimelate aminotransferase of Aquifex aeolicus (strain VF5).